Reading from the N-terminus, the 480-residue chain is 3-isopropylmalate dehydratase large subunit (480 aa).

Positions 360, 418, and 421 each coordinate [4Fe-4S] cluster.

Belongs to the aconitase/IPM isomerase family. LeuC type 1 subfamily. In terms of assembly, heterodimer of LeuC and LeuD. The cofactor is [4Fe-4S] cluster.

It catalyses the reaction (2R,3S)-3-isopropylmalate = (2S)-2-isopropylmalate. The protein operates within amino-acid biosynthesis; L-leucine biosynthesis; L-leucine from 3-methyl-2-oxobutanoate: step 2/4. Catalyzes the isomerization between 2-isopropylmalate and 3-isopropylmalate, via the formation of 2-isopropylmaleate. The chain is 3-isopropylmalate dehydratase large subunit from Anaeromyxobacter dehalogenans (strain 2CP-1 / ATCC BAA-258).